The following is a 317-amino-acid chain: 8-oxo-(d)GTP phosphatase (317 aa).

Positions 15–148 (RIVYAAGAVL…DRKVLCRFAK (134 aa)) constitute a Nudix hydrolase domain. Residues 43–46 (RPRY), aspartate 48, and 53–55 (KGK) contribute to the substrate site. Mg(2+)-binding residues include lysine 53, glutamate 69, and glutamate 73. A Nudix box motif is present at residues 54–75 (GKVDPGETAPVGAVREILEETG). Positions 89, 99, 118, and 136 each coordinate substrate. Glutamate 118 is a Mg(2+) binding site.

It belongs to the Nudix hydrolase family. Mg(2+) is required as a cofactor.

The enzyme catalyses 8-oxo-dGTP + H2O = 8-oxo-dGDP + phosphate + H(+). The catalysed reaction is 8-oxo-GTP + H2O = 8-oxo-GDP + phosphate + H(+). Catalyzes the conversion of 8-oxo-dGTP to 8-oxo-dGDP, and 8-oxo-GTP to 8-oxo-GDP. The protein is 8-oxo-(d)GTP phosphatase of Mycobacterium tuberculosis (strain CDC 1551 / Oshkosh).